Consider the following 236-residue polypeptide: Large ribosomal subunit protein uL3 (236 aa).

Belongs to the universal ribosomal protein uL3 family. As to quaternary structure, part of the 50S ribosomal subunit. Forms a cluster with proteins L14 and L19.

Functionally, one of the primary rRNA binding proteins, it binds directly near the 3'-end of the 23S rRNA, where it nucleates assembly of the 50S subunit. This chain is Large ribosomal subunit protein uL3, found in Anaeromyxobacter dehalogenans (strain 2CP-1 / ATCC BAA-258).